Here is a 303-residue protein sequence, read N- to C-terminus: Putative AraC-like transcription regulator (303 aa).

Residues 202-300 (ASALTFLHRD…GMNPGDYRKH (99 aa)) form the HTH araC/xylS-type domain. DNA-binding regions (H-T-H motif) lie at residues 219–240 (AELA…KATV) and 267–290 (LAAI…KRVL).

The polypeptide is Putative AraC-like transcription regulator (Streptomyces antibioticus).